The sequence spans 192 residues: GTP cyclohydrolase 1 (192 aa).

Cys76, His79, and Cys148 together coordinate Zn(2+).

It belongs to the GTP cyclohydrolase I family. As to quaternary structure, toroid-shaped homodecamer, composed of two pentamers of five dimers.

The enzyme catalyses GTP + H2O = 7,8-dihydroneopterin 3'-triphosphate + formate + H(+). It participates in cofactor biosynthesis; 7,8-dihydroneopterin triphosphate biosynthesis; 7,8-dihydroneopterin triphosphate from GTP: step 1/1. This chain is GTP cyclohydrolase 1, found in Carboxydothermus hydrogenoformans (strain ATCC BAA-161 / DSM 6008 / Z-2901).